The following is a 170-amino-acid chain: Cathelicidin antimicrobial peptide (170 aa).

The signal sequence occupies residues 1 to 30 (MKTQRDGHSLGGWSLMLLLLGLLMPLAIVA). Positions 31-131 (QVLSYKEAVL…DISCDKDNRR (101 aa)) are cleaved as a propeptide — cathelin-like domain (CLD). Intrachain disulfides connect Cys-86/Cys-97 and Cys-108/Cys-125. The active core stretch occupies residues 150-162 (FKRIVQRIKDFLQ).

Belongs to the cathelicidin family. As to quaternary structure, monomer, homodimer or homotrimer (in vitro). Oligomerizes as tetra- or hexamer in solution (in vitro). In terms of processing, proteolytically cleaved by proteinase PRTN3 into antibacterial peptide LL-37. Proteolytically cleaved by cathepsin CTSG and neutrophil elastase ELANE. Resistant to proteolytic degradation in solution, and when bound to both zwitterionic (mimicking mammalian membranes) and negatively charged membranes (mimicking bacterial membranes). Post-translationally, after secretion onto the skin surface, the CAMP gene product is processed by a serine protease-dependent mechanism into multiple novel antimicrobial peptides distinct from and shorter than cathelicidin LL-37. These peptides show enhanced antimicrobial action, acquiring the ability to kill skin pathogens such as S.aureus, E.coli and C.albicans. These peptides have lost the ability to stimulate CXCL8/IL8 release from keratinocytes. The peptides act synergistically, killing bacteria at lower concentrations when present together, and maintain activity at increased salt condition.

Its subcellular location is the secreted. The protein resides in the vesicle. In terms of biological role, antimicrobial protein that is an integral component of the innate immune system. Binds to bacterial lipopolysaccharides (LPS). Acts via neutrophil N-formyl peptide receptors to enhance the release of CXCL2. Postsecretory processing generates multiple cathelicidin antimicrobial peptides with various lengths which act as a topical antimicrobial defense in sweat on skin. The unprocessed precursor form, cathelicidin antimicrobial peptide, inhibits the growth of Gram-negative E.coli and E.aerogenes with efficiencies comparable to that of the mature peptide LL-37 (in vitro). Antimicrobial peptide that is an integral component of the innate immune system. Binds to bacterial lipopolysaccharides (LPS). Causes membrane permeabilization by forming transmembrane pores (in vitro). Causes lysis of E.coli. Exhibits antimicrobial activity against Gram-negative bacteria such as P.aeruginosa, S.typhimurium, E.aerogenes, E.coli and P.syringae, Gram-positive bacteria such as L.monocytogenes, S.epidermidis, S.pyogenes and S.aureus, as well as vancomycin-resistant enterococci (in vitro). Exhibits antimicrobial activity against methicillin-resistant S.aureus, P.mirabilis, and C.albicans in low-salt media, but not in media containing 100 mM NaCl (in vitro). Forms chiral supramolecular assemblies with quinolone signal (PQS) molecules of P.aeruginosa, which may lead to interference of bacterial quorum signaling and perturbance of bacterial biofilm formation. May form supramolecular fiber-like assemblies on bacterial membranes. Induces cytokine and chemokine producation as well as TNF/TNFA and CSF2/GMCSF production in normal human keratinocytes. Exhibits hemolytic activity against red blood cells. Its function is as follows. Exhibits antimicrobial activity against E.coli and B.megaterium (in vitro). This is Cathelicidin antimicrobial peptide from Hylobates moloch (Silvery gibbon).